We begin with the raw amino-acid sequence, 126 residues long: Large ribosomal subunit protein bL12 (126 aa).

The protein belongs to the bacterial ribosomal protein bL12 family. As to quaternary structure, homodimer. Part of the ribosomal stalk of the 50S ribosomal subunit. Forms a multimeric L10(L12)X complex, where L10 forms an elongated spine to which 2 to 4 L12 dimers bind in a sequential fashion. Binds GTP-bound translation factors.

Forms part of the ribosomal stalk which helps the ribosome interact with GTP-bound translation factors. Is thus essential for accurate translation. The chain is Large ribosomal subunit protein bL12 from Methylobacterium nodulans (strain LMG 21967 / CNCM I-2342 / ORS 2060).